We begin with the raw amino-acid sequence, 633 residues long: Pescadillo homolog (633 aa).

A BRCT domain is found at 321–414; it reads RLRTLFKGLK…QLLPTNKYFL (94 aa). 2 disordered regions span residues 450 to 470 and 490 to 567; these read HAQS…DTVE and KKYG…LQAR. S453 and S457 each carry phosphoserine. Composition is skewed to acidic residues over residues 454–470 and 498–526; these read EDES…DTVE and VNED…EELD. The segment covering 527 to 538 has biased composition (basic and acidic residues); it reads EKEKRLLEEKQK. Over residues 545 to 554 the composition is skewed to basic residues; sequence KVHKVNKRQV. Over residues 555-564 the composition is skewed to basic and acidic residues; the sequence is HKAEVDEHRL. The stretch at 593–626 forms a coiled coil; it reads LLRKKRRTIETDAKEAKKLAKREARKAAAAAAAA.

Belongs to the pescadillo family.

Its subcellular location is the nucleus. The protein resides in the nucleolus. The protein localises to the nucleoplasm. In terms of biological role, required for maturation of ribosomal RNAs and formation of the large ribosomal subunit. The sequence is that of Pescadillo homolog from Drosophila virilis (Fruit fly).